The chain runs to 506 residues: MKKAEMGRFSISPDEDSSSYSSNSDFNYSYPTKQAALKSHYADVDPENQNFLLESNLGKKKYETEFHPGTTSFGMSVFNLSNAIVGSGILGLSYAMANTGIALFIILLTFVSIFSLYSVHLLLKTANEGGSLLYEQLGYKAFGLVGKLAASGSITMQNIGAMSSYLFIVKYELPLVIQALTNIEDKTGLWYLNGNYLVLLVSLVVILPLSLFRNLGYLGYTSGLSLLCMVFFLIVVICKKFQVPCPVEAALIINETINTTLTQPTALVPALSHNVTENDSCRPHYFIFNSQTVYAVPILIFSFVCHPAVLPIYEELKDRSRRRMMNVSKISFFAMFLMYLLAALFGYLTFYEHVESELLHTYSSILGTDILLLIVRLAVLMAVTLTVPVVIFPIRSSVTHLLCASKDFSWWRHSLITVSILAFTNLLVIFVPTIRDIFGFIGASAASMLIFILPSAFYIKLVKKEPMKSVQKIGALFFLLSGVLVMTGSMALIVLDWVHNAPGGGH.

The tract at residues 1–23 (MKKAEMGRFSISPDEDSSSYSSN) is disordered. Residues 1 to 76 (MKKAEMGRFS…HPGTTSFGMS (76 aa)) lie on the Cytoplasmic side of the membrane. Residues 1–96 (MKKAEMGRFS…SGILGLSYAM (96 aa)) form a regulates protein turnover upon amino acid deprivation region. Residues serine 10, serine 12, serine 21, serine 22, and serine 55 each carry the phosphoserine modification. Residues 77 to 96 (VFNLSNAIVGSGILGLSYAM) traverse the membrane as a helical segment. Asparagine 82 contacts Na(+). Residues 97 to 102 (ANTGIA) lie on the Extracellular side of the membrane. A helical transmembrane segment spans residues 103–123 (LFIILLTFVSIFSLYSVHLLL). The Cytoplasmic portion of the chain corresponds to 124 to 158 (KTANEGGSLLYEQLGYKAFGLVGKLAASGSITMQN). Residues 159 to 177 (IGAMSSYLFIVKYELPLVI) traverse the membrane as a helical segment. Topologically, residues 178-188 (QALTNIEDKTG) are extracellular. Residues 189–209 (LWYLNGNYLVLLVSLVVILPL) traverse the membrane as a helical segment. Residues 210–217 (SLFRNLGY) are Cytoplasmic-facing. The chain crosses the membrane as a helical span at residues 218-238 (LGYTSGLSLLCMVFFLIVVIC). At 239 to 292 (KKFQVPCPVEAALIINETINTTLTQPTALVPALSHNVTENDSCRPHYFIFNSQT) the chain is on the extracellular side. Cysteines 245 and 281 form a disulfide. Asparagine 258 and asparagine 274 each carry an N-linked (GlcNAc...) asparagine glycan. The chain crosses the membrane as a helical span at residues 293–313 (VYAVPILIFSFVCHPAVLPIY). Over 314–329 (EELKDRSRRRMMNVSK) the chain is Cytoplasmic. Residues 330–350 (ISFFAMFLMYLLAALFGYLTF) traverse the membrane as a helical segment. The Extracellular segment spans residues 351-371 (YEHVESELLHTYSSILGTDIL). Residues 372-392 (LLIVRLAVLMAVTLTVPVVIF) traverse the membrane as a helical segment. Threonine 386 lines the Na(+) pocket. Topologically, residues 393–413 (PIRSSVTHLLCASKDFSWWRH) are cytoplasmic. A helical membrane pass occupies residues 414–434 (SLITVSILAFTNLLVIFVPTI). Topologically, residues 435 to 436 (RD) are extracellular. A helical membrane pass occupies residues 437 to 457 (IFGFIGASAASMLIFILPSAF). Over 458–472 (YIKLVKKEPMKSVQK) the chain is Cytoplasmic. Residues 473 to 495 (IGALFFLLSGVLVMTGSMALIVL) traverse the membrane as a helical segment. Residues 496–506 (DWVHNAPGGGH) lie on the Extracellular side of the membrane.

This sequence belongs to the amino acid/polyamine transporter 2 family. Post-translationally, polyubiquitination by NEDD4L regulates the degradation and the activity of SLC38A2. Ubiquitously expressed. Expressed in neocortex. Widely expressed in the central nervous system with higher concentrations in caudal regions. Expressed by glutamatergic and GABAergic neurons together with astrocytes and other non-neuronal cells in the cerebral cortex (at protein level).

The protein resides in the cell membrane. The enzyme catalyses L-alanine(in) + Na(+)(in) = L-alanine(out) + Na(+)(out). The catalysed reaction is glycine(in) + Na(+)(in) = glycine(out) + Na(+)(out). It catalyses the reaction L-serine(in) + Na(+)(in) = L-serine(out) + Na(+)(out). It carries out the reaction L-proline(in) + Na(+)(in) = L-proline(out) + Na(+)(out). The enzyme catalyses L-methionine(in) + Na(+)(in) = L-methionine(out) + Na(+)(out). The catalysed reaction is L-histidine(in) + Na(+)(in) = L-histidine(out) + Na(+)(out). It catalyses the reaction L-asparagine(in) + Na(+)(in) = L-asparagine(out) + Na(+)(out). It carries out the reaction L-glutamine(in) + Na(+)(in) = L-glutamine(out) + Na(+)(out). The enzyme catalyses L-threonine(in) + Na(+)(in) = L-threonine(out) + Na(+)(out). The catalysed reaction is L-leucine(in) + Na(+)(in) = L-leucine(out) + Na(+)(out). It catalyses the reaction L-phenylalanine(in) + Na(+)(in) = L-phenylalanine(out) + Na(+)(out). Inhibited by N-methyl-D-glucamine. Inhibited by choline. Allosteric regulation of sodium ions binding by pH. In terms of biological role, symporter that cotransports neutral amino acids and sodium ions from the extracellular to the intracellular side of the cell membrane. The transport is pH-sensitive, Li(+)-intolerant, electrogenic, driven by the Na(+) electrochemical gradient and cotransports of neutral amino acids and sodium ions with a stoichiometry of 1:1. May function in the transport of amino acids at the blood-brain barrier. May function in the transport of amino acids in the supply of maternal nutrients to the fetus through the placenta. Maintains a key metabolic glutamine/glutamate balance underpinning retrograde signaling by dendritic release of the neurotransmitter glutamate. Transports L-proline in differentiating osteoblasts for the efficient synthesis of proline-enriched proteins and provides proline essential for osteoblast differentiation and bone formation during bone development. This chain is Sodium-coupled neutral amino acid symporter 2, found in Homo sapiens (Human).